Consider the following 154-residue polypeptide: Myoglobin (154 aa).

A Globin domain is found at Gly2–Lys148. Residue Ser4 is modified to Phosphoserine. Residue His65 participates in nitrite binding. His65 lines the O2 pocket. Phosphothreonine is present on Thr68. His94 provides a ligand contact to heme b.

It belongs to the globin family. As to quaternary structure, monomeric.

Its subcellular location is the cytoplasm. The protein localises to the sarcoplasm. The catalysed reaction is Fe(III)-heme b-[protein] + nitric oxide + H2O = Fe(II)-heme b-[protein] + nitrite + 2 H(+). It carries out the reaction H2O2 + AH2 = A + 2 H2O. Functionally, monomeric heme protein which primary function is to store oxygen and facilitate its diffusion within muscle tissues. Reversibly binds oxygen through a pentacoordinated heme iron and enables its timely and efficient release as needed during periods of heightened demand. Depending on the oxidative conditions of tissues and cells, and in addition to its ability to bind oxygen, it also has a nitrite reductase activity whereby it regulates the production of bioactive nitric oxide. Under stress conditions, like hypoxia and anoxia, it also protects cells against reactive oxygen species thanks to its pseudoperoxidase activity. This chain is Myoglobin (MB), found in Erinaceus europaeus (Western European hedgehog).